A 175-amino-acid chain; its full sequence is uncharacterized protein (175 aa).

The segment covering Met1–Thr10 has biased composition (polar residues). A disordered region spans residues Met1 to Ser21.

This is an uncharacterized protein from Ureaplasma parvum serovar 3 (strain ATCC 700970).